The primary structure comprises 56 residues: UPF0391 membrane protein HCH_04387 (56 aa).

2 helical membrane-spanning segments follow: residues 6–26 (IVFF…IAAA) and 30–50 (IAQI…IAGG).

It belongs to the UPF0391 family.

It is found in the cell membrane. In Hahella chejuensis (strain KCTC 2396), this protein is UPF0391 membrane protein HCH_04387.